The following is a 176-amino-acid chain: Translation initiation factor IF-3 (176 aa).

It belongs to the IF-3 family. Monomer.

The protein localises to the cytoplasm. Functionally, IF-3 binds to the 30S ribosomal subunit and shifts the equilibrium between 70S ribosomes and their 50S and 30S subunits in favor of the free subunits, thus enhancing the availability of 30S subunits on which protein synthesis initiation begins. The polypeptide is Translation initiation factor IF-3 (Wolinella succinogenes (strain ATCC 29543 / DSM 1740 / CCUG 13145 / JCM 31913 / LMG 7466 / NCTC 11488 / FDC 602W) (Vibrio succinogenes)).